We begin with the raw amino-acid sequence, 169 residues long: Gametocyte-specific factor 1-like (169 aa).

2 consecutive CHHC U11-48K-type zinc fingers follow at residues 6–33 and 40–67; these read LETC…RRKN and MASC…VNKS. Positions 9, 15, 25, 29, 43, 49, 59, and 63 each coordinate Zn(2+). Disordered stretches follow at residues 67–103 and 131–169; these read STME…LPNP and SDTR…LLKA. Basic and acidic residues predominate over residues 131 to 158; the sequence is SDTRESETDDHNPIPDCPRRRSSDRESE.

Belongs to the UPF0224 (FAM112) family.

The protein is Gametocyte-specific factor 1-like (GTSF1L) of Bos taurus (Bovine).